The sequence spans 534 residues: Multicopper oxidase LPR1 homolog 3 (534 aa).

Cu cation contacts are provided by His84 and His86. N-linked (GlcNAc...) asparagine glycosylation is present at Asn109. Residues His133 and His135 each contribute to the Cu cation site. A Plastocyanin-like domain is found at 219 to 291; sequence PFQAVQRRRY…VDFSLVVNPN (73 aa). 6 N-linked (GlcNAc...) asparagine glycosylation sites follow: Asn234, Asn291, Asn312, Asn323, Asn341, and Asn372. The Cu cation site is built by His419, His422, and His424. A glycan (N-linked (GlcNAc...) asparagine) is linked at Asn450. The Cu cation site is built by His515, Cys516, His517, His521, and Met526.

It belongs to the multicopper oxidase family. Cu cation serves as cofactor. As to expression, expressed in roots and basal stems.

It is found in the endoplasmic reticulum membrane. Its function is as follows. Multicopper oxidase that may play a role in the maintenance of inorganic phosphate homeostasis. The sequence is that of Multicopper oxidase LPR1 homolog 3 from Oryza sativa subsp. japonica (Rice).